The sequence spans 199 residues: Inner membrane protein E199L (199 aa).

N131 is a glycosylation site (N-linked (GlcNAc...) asparagine; by host). Residues 150 to 170 (INVMNHPFLTLILIILILVII) traverse the membrane as a helical segment.

Belongs to the asfivirus E199L family. As to quaternary structure, interacts with host PYCR2; this interaction results in autophagy activation. Contains intramolecular disulfide bonds.

Its subcellular location is the virion membrane. It localises to the host membrane. Functionally, essential for viral fusion with host endosomal membrane and core release. Not required for virus morphogenesis and egress. Induces complete autophagy through the interaction with and down-regulation of host PYCR2. The sequence is that of Inner membrane protein E199L from African swine fever virus (isolate Tick/Malawi/Lil 20-1/1983) (ASFV).